A 130-amino-acid polypeptide reads, in one-letter code: Small ribosomal subunit protein uS9 (130 aa).

The tract at residues 98-130 (LKRAGLLTRDPRMKERKKPGLKKARRSPQFSKR) is disordered. Positions 111–130 (KERKKPGLKKARRSPQFSKR) are enriched in basic residues.

Belongs to the universal ribosomal protein uS9 family.

The sequence is that of Small ribosomal subunit protein uS9 from Staphylococcus saprophyticus subsp. saprophyticus (strain ATCC 15305 / DSM 20229 / NCIMB 8711 / NCTC 7292 / S-41).